Here is a 277-residue protein sequence, read N- to C-terminus: MEWWTAFQAFILGVVEGLTEFLPISSTGHQIIVADLIGFGGERAKAFNIIIQLAAILAVVWEFRGKIFQVVRDLPSQHQAQRFTVNLLIAFFPAVILGVLFADLIHEWLFNPITVALALVVGGVIMLWAERRQHVIRAEHVDDMTWKDALKIGCAQCLAMVPGTSRSGATIIGGLLFGLSRKAATEFSFFLAMPTMVGAAVYSGYKYRELFRPEDLPVFAVGFVTSFVFAMVAVRALLKFIGNHSYAAFAWYRIAFGLLILATWQFHLIDWSTAGDL.

Transmembrane regions (helical) follow at residues 47-67 (FNII…RGKI), 85-105 (VNLL…ADLI), 108-128 (WLFN…IMLW), 183-203 (AATE…AVYS), 218-238 (VFAV…RALL), and 249-269 (FAWY…FHLI).

It belongs to the UppP family.

It localises to the cell inner membrane. It carries out the reaction di-trans,octa-cis-undecaprenyl diphosphate + H2O = di-trans,octa-cis-undecaprenyl phosphate + phosphate + H(+). Its function is as follows. Catalyzes the dephosphorylation of undecaprenyl diphosphate (UPP). Confers resistance to bacitracin. The polypeptide is Undecaprenyl-diphosphatase (Pseudomonas paraeruginosa (strain DSM 24068 / PA7) (Pseudomonas aeruginosa (strain PA7))).